The sequence spans 50 residues: Photosystem II reaction center protein M (50 aa).

A helical membrane pass occupies residues 7–27; the sequence is GFVASLLFVGVPTIFLIGLFI.

Belongs to the PsbM family. As to quaternary structure, PSII is composed of 1 copy each of membrane proteins PsbA, PsbB, PsbC, PsbD, PsbE, PsbF, PsbH, PsbI, PsbJ, PsbK, PsbL, PsbM, PsbT, PsbX, PsbY, Psb30/Ycf12, peripheral proteins PsbO, CyanoQ (PsbQ), PsbU, PsbV and a large number of cofactors. It forms dimeric complexes.

Its subcellular location is the cellular thylakoid membrane. One of the components of the core complex of photosystem II (PSII). PSII is a light-driven water:plastoquinone oxidoreductase that uses light energy to abstract electrons from H(2)O, generating O(2) and a proton gradient subsequently used for ATP formation. It consists of a core antenna complex that captures photons, and an electron transfer chain that converts photonic excitation into a charge separation. This subunit is found at the monomer-monomer interface. The chain is Photosystem II reaction center protein M from Prochlorococcus marinus (strain MIT 9515).